The sequence spans 120 residues: Ribonuclease P protein component (120 aa).

It belongs to the RnpA family. In terms of assembly, consists of a catalytic RNA component (M1 or rnpB) and a protein subunit.

The enzyme catalyses Endonucleolytic cleavage of RNA, removing 5'-extranucleotides from tRNA precursor.. In terms of biological role, RNaseP catalyzes the removal of the 5'-leader sequence from pre-tRNA to produce the mature 5'-terminus. It can also cleave other RNA substrates such as 4.5S RNA. The protein component plays an auxiliary but essential role in vivo by binding to the 5'-leader sequence and broadening the substrate specificity of the ribozyme. This chain is Ribonuclease P protein component, found in Mycobacterium marinum (strain ATCC BAA-535 / M).